Consider the following 392-residue polypeptide: Tryptophan synthase beta chain (392 aa).

Position 84 is an N6-(pyridoxal phosphate)lysine (K84).

It belongs to the TrpB family. As to quaternary structure, tetramer of two alpha and two beta chains. The cofactor is pyridoxal 5'-phosphate.

The catalysed reaction is (1S,2R)-1-C-(indol-3-yl)glycerol 3-phosphate + L-serine = D-glyceraldehyde 3-phosphate + L-tryptophan + H2O. It participates in amino-acid biosynthesis; L-tryptophan biosynthesis; L-tryptophan from chorismate: step 5/5. Functionally, the beta subunit is responsible for the synthesis of L-tryptophan from indole and L-serine. This Campylobacter jejuni subsp. doylei (strain ATCC BAA-1458 / RM4099 / 269.97) protein is Tryptophan synthase beta chain.